Here is a 182-residue protein sequence, read N- to C-terminus: Large ribosomal subunit protein eL15 (182 aa).

This sequence belongs to the eukaryotic ribosomal protein eL15 family.

The chain is Large ribosomal subunit protein eL15 (rpl15e) from Methanothermobacter thermautotrophicus (strain ATCC 29096 / DSM 1053 / JCM 10044 / NBRC 100330 / Delta H) (Methanobacterium thermoautotrophicum).